Consider the following 227-residue polypeptide: ATP synthase subunit delta (227 aa).

The protein belongs to the ATPase delta chain family. F-type ATPases have 2 components, F(1) - the catalytic core - and F(0) - the membrane proton channel. F(1) has five subunits: alpha(3), beta(3), gamma(1), delta(1), epsilon(1). F(0) has three main subunits: a(1), b(2) and c(10-14). The alpha and beta chains form an alternating ring which encloses part of the gamma chain. F(1) is attached to F(0) by a central stalk formed by the gamma and epsilon chains, while a peripheral stalk is formed by the delta and b chains.

It is found in the cell inner membrane. Its function is as follows. F(1)F(0) ATP synthase produces ATP from ADP in the presence of a proton or sodium gradient. F-type ATPases consist of two structural domains, F(1) containing the extramembraneous catalytic core and F(0) containing the membrane proton channel, linked together by a central stalk and a peripheral stalk. During catalysis, ATP synthesis in the catalytic domain of F(1) is coupled via a rotary mechanism of the central stalk subunits to proton translocation. This protein is part of the stalk that links CF(0) to CF(1). It either transmits conformational changes from CF(0) to CF(1) or is implicated in proton conduction. The polypeptide is ATP synthase subunit delta (Rhodopirellula baltica (strain DSM 10527 / NCIMB 13988 / SH1)).